Reading from the N-terminus, the 671-residue chain is UBA domain-containing protein RUP1 (671 aa).

The UBA domain maps to 1 to 41 (MMDNQAVKSLLEMGIPHEVAVDALQRTGGNLEAAVNFIFSN). Ser-56 carries the phosphoserine modification. Positions 68–87 (GTKPCDVPNNGDQDIDMPDV) are disordered. Positions 432–501 (SKRKQARTRS…LNSARAAKME (70 aa)) form a coiled coil. A disordered region spans residues 643-671 (DGMGDPEQATNNINNGNDNDNDDDIDSDN). Residues 661 to 671 (NDNDDDIDSDN) are compositionally biased toward acidic residues.

In terms of assembly, forms a ternary complex with RSP5 and UBP2.

It localises to the cytoplasm. Its subcellular location is the nucleus. Functionally, modulates the activity of the RSP5 HECT ubiquitin-protein ligase through its mediation of the interaction between RSP5 and the deubiquitinase UBP2. Involved in regulation of cell wall homeostasis. This Saccharomyces cerevisiae (strain ATCC 204508 / S288c) (Baker's yeast) protein is UBA domain-containing protein RUP1 (RUP1).